The primary structure comprises 261 residues: MNLAVIGHPIAHSLSPQLHEQWLRASGLFGRYEAIDATPDQLPALFAAMREGDWDGFNVTIPYKEVVVRYLDDLDEAAKHAGAVNTVYKRDGRLIGTNTDGAGLVQALMPYTDFRGHVLIVGAGGAARGIVQALPTRDVTIVNRTVERAKALADTFGVVYTTFDEMDVSRYDVIIQTTSVGMDERSTPLSLEGLRQNTVVCDIIYRPLVTPMLQEAKSRGANIVTGVAMFVGQGALSFEKWTGVKPDETVGKKLIEGLLEE.

Shikimate is bound by residues 13-15 (SLS) and threonine 60. Catalysis depends on lysine 64, which acts as the Proton acceptor. Residue glutamate 76 participates in NADP(+) binding. 2 residues coordinate shikimate: asparagine 85 and aspartate 100. Residues 122–126 (GAGGA), 143–148 (NRTVER), and isoleucine 203 each bind NADP(+). Tyrosine 205 is a binding site for shikimate. NADP(+) is bound at residue glycine 226.

It belongs to the shikimate dehydrogenase family. As to quaternary structure, homodimer.

It catalyses the reaction shikimate + NADP(+) = 3-dehydroshikimate + NADPH + H(+). Its pathway is metabolic intermediate biosynthesis; chorismate biosynthesis; chorismate from D-erythrose 4-phosphate and phosphoenolpyruvate: step 4/7. Its function is as follows. Involved in the biosynthesis of the chorismate, which leads to the biosynthesis of aromatic amino acids. Catalyzes the reversible NADPH linked reduction of 3-dehydroshikimate (DHSA) to yield shikimate (SA). This chain is Shikimate dehydrogenase (NADP(+)), found in Exiguobacterium sp. (strain ATCC BAA-1283 / AT1b).